The chain runs to 173 residues: Mediator of RNA polymerase II transcription subunit 10 (173 aa).

A compositionally biased stretch (low complexity) spans 1 to 10 (MVQQQQQSQQ). The disordered stretch occupies residues 1 to 42 (MVQQQQQSQQRMMELHERNDREKLARKTEKEREEERRKQEDD). Positions 13–42 (MELHERNDREKLARKTEKEREEERRKQEDD) are enriched in basic and acidic residues.

The protein belongs to the Mediator complex subunit 10 family. In terms of assembly, component of the Mediator complex.

Its subcellular location is the nucleus. Component of the Mediator complex, a coactivator involved in the regulated transcription of nearly all RNA polymerase II-dependent genes. Mediator functions as a bridge to convey information from gene-specific regulatory proteins to the basal RNA polymerase II transcription machinery. Mediator is recruited to promoters by direct interactions with regulatory proteins and serves as a scaffold for the assembly of a functional preinitiation complex with RNA polymerase II and the general transcription factors. Required for germ cell development and for transcriptional activation of certain stage-specific inducible promoters. This is Mediator of RNA polymerase II transcription subunit 10 (mdt-10) from Caenorhabditis elegans.